The chain runs to 210 residues: Putative truncated L-serine dehydratase SDL1 (210 aa).

The protein belongs to the serine/threonine dehydratase family. It depends on pyridoxal 5'-phosphate as a cofactor.

It is found in the cytoplasm. The enzyme catalyses L-serine = pyruvate + NH4(+). It participates in carbohydrate biosynthesis; gluconeogenesis. The polypeptide is Putative truncated L-serine dehydratase SDL1 (SDL1) (Saccharomyces cerevisiae (strain ATCC 204508 / S288c) (Baker's yeast)).